We begin with the raw amino-acid sequence, 156 residues long: Large ribosomal subunit protein uL11 (156 aa).

Positions 1–20 (MAQSVKTMVEGGKATTGPPI) are disordered.

This sequence belongs to the universal ribosomal protein uL11 family. Part of the ribosomal stalk of the 50S ribosomal subunit. Interacts with L10 and the large rRNA to form the base of the stalk. L10 forms an elongated spine to which L12 dimers bind in a sequential fashion forming a multimeric L10(L12)X complex.

Forms part of the ribosomal stalk which helps the ribosome interact with GTP-bound translation factors. This is Large ribosomal subunit protein uL11 from Thermoplasma acidophilum (strain ATCC 25905 / DSM 1728 / JCM 9062 / NBRC 15155 / AMRC-C165).